Consider the following 358-residue polypeptide: Protein-arginine kinase (358 aa).

The Phosphagen kinase C-terminal domain maps to 24-255; the sequence is IVLSSRIRLA…KQLIRQERVA (232 aa). Residues 27 to 31, H92, R126, 177 to 181, and 208 to 213 each bind ATP; these read SSRIR, RASVM, and RGIYGE. An RDXXRA motif of the pArg binding pocket involved in allosteric regulation motif is present at residues 338–343; sequence RDERRA.

It belongs to the ATP:guanido phosphotransferase family.

It carries out the reaction L-arginyl-[protein] + ATP = N(omega)-phospho-L-arginyl-[protein] + ADP + H(+). Appears to be allosterically activated by the binding of pArg-containing polypeptides to the pArg-binding pocket localized in the C-terminal domain of McsB. Catalyzes the specific phosphorylation of arginine residues in a large number of proteins. Is part of the bacterial stress response system. Protein arginine phosphorylation has a physiologically important role and is involved in the regulation of many critical cellular processes, such as protein homeostasis, motility, competence, and stringent and stress responses, by regulating gene expression and protein activity. The protein is Protein-arginine kinase of Shouchella clausii (strain KSM-K16) (Alkalihalobacillus clausii).